A 1248-amino-acid chain; its full sequence is Ankyrin repeat and sterile alpha motif domain-containing protein 1B (1248 aa).

ANK repeat units lie at residues G2–L31, S58–V87, K91–R120, E127–I156, K160–S189, R193–C222, and E225–I254. Residues E296–E322 form a disordered region. Over residues E305–E322 the composition is skewed to polar residues. S309, S310, S314, S353, and S364 each carry phosphoserine. Disordered stretches follow at residues E367–G400, A474–A514, and S558–F623. Over residues N371 to L384 the composition is skewed to polar residues. Over residues E388–N397 the composition is skewed to acidic residues. Phosphothreonine is present on T503. A phosphoserine mark is found at S507 and S510. Positions S558 to T575 are enriched in low complexity. Residues V577–D601 are compositionally biased toward basic and acidic residues. Position 738 is a phosphoserine (S738). The segment at E749–T777 is disordered. A compositionally biased stretch (polar residues) spans R753–E763. T773 carries the phosphothreonine modification. S775 bears the Phosphoserine mark. 2 consecutive SAM domains span residues C810–M876 and Y884–D949. Y901 bears the Phosphotyrosine mark. The Nuclear localization signal motif lies at H935–R938. The disordered stretch occupies residues G944–D989. The segment covering T969–T984 has biased composition (low complexity). S974 bears the Phosphoserine mark. Residue Y1007 is modified to Phosphotyrosine. Residues I1056–I1213 form the PID domain. The interval H1197–F1248 is disordered. The span at P1236–F1248 shows a compositional bias: basic and acidic residues.

Isoform 3 interacts with DLG4. Interacts with EPHA8. Isoform 2 interacts with COIL. Isoform 4 interacts with APP and EPHA8. Isoform 6 interacts with EPHA8. Isoform 3 nuclear translocation requires an NMDAR-dependent proteolytic cleavage. In terms of tissue distribution, highly expressed in marrow from patients with pre-B ALL associated with the t(1;19) translocation. Strongly expressed in brain and testis. Expressed in fetal brain. Isoform 4 is highly expressed in brain (at protein level). Isoform 6 is expressed in brain and several cancer cell lines.

It localises to the cytoplasm. The protein resides in the nucleus. Its subcellular location is the postsynaptic density. It is found in the cell projection. The protein localises to the dendritic spine. It localises to the cajal body. Its function is as follows. Isoform 2 may participate in the regulation of nucleoplasmic coilin protein interactions in neuronal and transformed cells. In terms of biological role, isoform 3 can regulate global protein synthesis by altering nucleolar numbers. Isoform 4 may play a role as a modulator of APP processing. Overexpression can down-regulate APP processing. The polypeptide is Ankyrin repeat and sterile alpha motif domain-containing protein 1B (ANKS1B) (Homo sapiens (Human)).